Here is a 281-residue protein sequence, read N- to C-terminus: Aldo-keto reductase MMAR_1744 (281 aa).

The active-site Proton donor is the tyrosine 56. Residues leucine 196, isoleucine 234, serine 237, threonine 245, asparagine 246, and arginine 272 each contribute to the NADPH site.

This sequence belongs to the aldo/keto reductase family.

The protein is Aldo-keto reductase MMAR_1744 of Mycobacterium marinum (strain ATCC BAA-535 / M).